The following is a 346-amino-acid chain: Melanoma-associated antigen B4 (346 aa).

The span at 1–18 shows a compositional bias: basic residues; that stretch reads MPRGQKSKLRAREKRQRT. The tract at residues 1–107 is disordered; the sequence is MPRGQKSKLR…STSTERSLKD (107 aa). The segment covering 45–54 has biased composition (polar residues); the sequence is VLRDTASSSL. Low complexity predominate over residues 92-101; sequence ASSSQASTST. An MAGE domain is found at 109 to 307; sequence LTRKTKMLVQ…NNFPLLYEEA (199 aa). The segment at 311-346 is disordered; that stretch reads EEERAGARPRVAARRGTTAMTSAYSRATSSSSSQPM. Positions 318–346 are enriched in low complexity; it reads RPRVAARRGTTAMTSAYSRATSSSSSQPM.

Expressed in testis.

The protein localises to the cytoplasm. The polypeptide is Melanoma-associated antigen B4 (MAGEB4) (Homo sapiens (Human)).